We begin with the raw amino-acid sequence, 1776 residues long: MIDDMIISLIYQEADEKLLNTLYEIFTYLNSAKLARFTLEYLISGKDESDDLFGLIPVEDLCKQKYKLLLQRLHISKPSSSDGDGTRELELIKEKLAFLEPIKADYNTSIENTTNLKTVNINIEYAQRDLNWTSVIDDINKKVKHLQDKEKSQELSRLRIKDLDPYLLTENPIERVRFTIPVPEDESTHDDDVEKNDSKEVDKENNEVPDGEILIDEGSNHINSDEEIFLEAREFLEKEINDGKETQDSKNPSEKDVEGSTCKLDHIPANREVIEGEKHISEENAISKSAPMIQRSSKRVRYRNEESSMEINDVEITRSCFVETERFFENLNSYLDLFNKEAATNLTLTNIVNIYVPEKNNNDENSAEGYVNDFLFILNDWNTRKYTHSLFVDDDTPAGSTASKSTEDEKIKLMEVLSTFGKKGDSLNSDLSKDIKDISSYETTEEIQKFLHDINENPCHYEELKLLILRKLLSIQRPKGDFKGHAAYCLITDTIWNSKLYDRIREWTIQCESIILNHLRLEGCDALGISHMLDDFSFSVAIYEILVDTYISIKDQINSMTSLNYKRTTHKPNKATLNNISLELVKIGDKLNRWTQHFEDLLERIDLSFAMMDQDFFTYYCRYKWSFIHKEKSQNTIWQEKGFIMSQLHELHDNISTKKEAEAHIPLPNYENINEISVDSIKTQVTTTSILSILAKILYAKPGTNNDEAIHLLETILISDSSPDESIEALPLNKEVSTFDKDALIAIKDFLEESPVDMKLSSWNILFSYYDENNQFAKFQHGFEQNVSFILYYLNSNTYNGLIGTKFETLAKVLGSYGKHVRIFLSHLRENNWKLSRDSHRTSSSIERTFSELLKLFELFYLFSIHEEAALISSSKLSVKARSNKAYERFKDIFISTVSVIVIYYKELLMNTVKIEESKVPSEIEKTIGNLICDFHEQLGWRRVCDAAEGLFLNLAQDILVAFDNNLFEKQLAQLISCRYHYSVSIDTFTPANHETKKTAEFDLSSTQRMADFILPLCFKKNPLKATPKSDMKLLIDEFYEVVGDPDFDSCEILSRNDSLFEHFLESTSITSRFLRDTFYGLEELDFRNPPDNANIIRSGLYYMQGLLMFASYKIRKKSTQSRAVELENIIMLLKNDLVYCTNRMESWFLLGQAYGFLVEDDLIWTSDKLTVPERKIGTANLQRKSLICYLMAINESTKANIKKDLPLKTTIGSLMALFSKEMYNAAMKPMDMHAFKVQNIPRFIKKPTGAAFVSVSTSSVNSNLCLKVIQQSLHIAIKSKRNDWTYYYYLSKVQRKLNKSPRIVLDTLQQASNIAKEQSNPSDPIIEPHYKKCSLIYKYAKEGSLSFQSGLEFLKNDMVINYEKGNKSIEKPMDFYEIIVECLKAVISYDKKRWHHKPRYRLAKVLFEEFGKITEAKEEISSIVSLKSTNKTLVSIWKPENERPGKHFYYTFQYAHFYVVLLSSDRNLIGLIQMLPKLRRSNSIMVSLYSLWETLCSSICKIIRNSLKVDEGFTERFMSSSGYQKFMMNSKSLLENMKGDGVPGELQIHLCFLHAITDMKKLNNGFGPTSLIDDTMVAIFIRIYLYFEKQSNNLKPMGTPEPTESPNEKAKKLAKRDFFPLISDMLKTFRRDIENILKDQPDIYNDFVSCSDKKVEKEGVVGKENNVNSKILEEEQSREVIKTPELKMDSINFESVSDKHITQNKLEADTILQENNDKSPKNNGIKDNENSIPDSRARTLDEMLFNKGLEKKVQGESPTAKKQKLNSDHHDSASE.

Disordered stretches follow at residues 180–218, 241–260, and 1709–1776; these read IPVP…IDEG, NDGK…VEGS, and ADTI…SASE. Residues 190–206 show a composition bias toward basic and acidic residues; it reads DDDVEKNDSKEVDKENN. Basic and acidic residues-rich tracts occupy residues 1716–1742 and 1766–1776; these read NNDK…RTLD and LNSDHHDSASE.

This sequence belongs to the HIR3 family.

It is found in the nucleus. Its function is as follows. Has a role in a nucleosome assembly pathway that is required for the integrity of heterochromatin and proper chromosome segregation. This Debaryomyces hansenii (strain ATCC 36239 / CBS 767 / BCRC 21394 / JCM 1990 / NBRC 0083 / IGC 2968) (Yeast) protein is Histone transcription regulator 3 homolog (HIR3).